Here is a 429-residue protein sequence, read N- to C-terminus: 4-hydroxyphenylacetate degradation bifunctional isomerase/decarboxylase (429 aa).

2 Approximate repeats span residues 1-215 (MKGT…NQTF) and 216-429 (TWPL…ESAN). A divalent metal cation contacts are provided by glutamate 276, glutamate 278, and aspartate 307.

The protein belongs to the FAH family. As to quaternary structure, monomer. It depends on Mg(2+) as a cofactor.

The catalysed reaction is (2E,4Z)-5-hydroxypenta-2,4-diene-1,2,5-tricarboxylate = (3E,5R)-5-carboxy-2-oxohept-3-enedioate. It carries out the reaction (3E,5R)-5-carboxy-2-oxohept-3-enedioate + H(+) = (4Z)-2-oxohept-4-enedioate + CO2. It functions in the pathway aromatic compound metabolism; 4-hydroxyphenylacetate degradation; pyruvate and succinate semialdehyde from 4-hydroxyphenylacetate: step 4/7. The protein operates within aromatic compound metabolism; 4-hydroxyphenylacetate degradation; pyruvate and succinate semialdehyde from 4-hydroxyphenylacetate: step 5/7. In terms of biological role, decarboxylates OPET (5-oxo-pent-3-ene-1,2,5-tricarboxylic acid) into HHDD (2-hydroxy-hept-2,4-diene-1,7-dioate) and isomerizes it to OHED (2-oxo-hept-3-ene-1,7-dioate). The chain is 4-hydroxyphenylacetate degradation bifunctional isomerase/decarboxylase (hpaG) from Salmonella dublin.